The following is a 483-amino-acid chain: Peroxisomal biogenesis factor 3 (483 aa).

Over 1-14 (MTGNRSLVQRHRKK) the chain is Peroxisomal. A helical membrane pass occupies residues 15–35 (FVVSSVLFATLFATCAITVYF). The Cytoplasmic portion of the chain corresponds to 36–483 (SKRWLYKQHL…SACVYSNFGL (448 aa)). Disordered stretches follow at residues 119 to 149 (GLSSGMSAMTPAPSVSAKSPQSADTTSVSET) and 230 to 253 (NNLPSEKADPRNSDGTIDTDTRSI). Positions 242–253 (SDGTIDTDTRSI) are enriched in polar residues.

Belongs to the peroxin-3 family.

It is found in the peroxisome membrane. Its function is as follows. Involved in peroxisome biosynthesis. This Kluyveromyces lactis (strain ATCC 8585 / CBS 2359 / DSM 70799 / NBRC 1267 / NRRL Y-1140 / WM37) (Yeast) protein is Peroxisomal biogenesis factor 3 (PEX3).